The chain runs to 448 residues: UDP-N-acetylmuramate--L-alanine ligase (448 aa).

Residue 118–124 (GTHGKTT) coordinates ATP.

It belongs to the MurCDEF family.

The protein localises to the cytoplasm. The enzyme catalyses UDP-N-acetyl-alpha-D-muramate + L-alanine + ATP = UDP-N-acetyl-alpha-D-muramoyl-L-alanine + ADP + phosphate + H(+). Its pathway is cell wall biogenesis; peptidoglycan biosynthesis. Cell wall formation. This Flavobacterium psychrophilum (strain ATCC 49511 / DSM 21280 / CIP 103535 / JIP02/86) protein is UDP-N-acetylmuramate--L-alanine ligase.